We begin with the raw amino-acid sequence, 194 residues long: PRELI domain containing protein 3B (194 aa).

In terms of domain architecture, PRELI/MSF1 spans 1 to 172 (MKIWTSEHVF…VIHKLNAEIE (172 aa)). 2 positions are modified to phosphoserine: Ser-46 and Ser-51.

The protein belongs to the slowmo family.

The protein is PRELI domain containing protein 3B (PRELID3B) of Homo sapiens (Human).